Here is a 710-residue protein sequence, read N- to C-terminus: FAST kinase domain-containing protein 2, mitochondrial (710 aa).

2 positions are modified to phosphoserine: S126 and S140. The RAP domain maps to 634-691 (VAVLCVSRSAYCLGSSHPRGFLAMKMRHLNAMGFHVILVNNWEMDKLEMEDAVTFLKT). S708 carries the phosphoserine modification.

Belongs to the FAST kinase family. In terms of assembly, monomer. Found in a complex with GRSF1, DDX28, DHX30 and FASTKD5. Associates with the 16S mitochondrial rRNA (16S mt-rRNA). Forms a regulatory protein-RNA complex, consisting of RCC1L, NGRN, RPUSD3, RPUSD4, TRUB2, FASTKD2 and 16S mt-rRNA. As to expression, expression detected in spleen, thymus, testis, ovary, colon, heart, smooth muscle, kidney, brain, lung, liver and white adipose tissue with highest expression in heart, smooth muscle and thyroid.

The protein resides in the mitochondrion matrix. It localises to the mitochondrion nucleoid. Functionally, plays an important role in assembly of the mitochondrial large ribosomal subunit. As a component of a functional protein-RNA module, consisting of RCC1L, NGRN, RPUSD3, RPUSD4, TRUB2, FASTKD2 and 16S mitochondrial ribosomal RNA (16S mt-rRNA), controls 16S mt-rRNA abundance and is required for intra-mitochondrial translation. May play a role in mitochondrial apoptosis. This is FAST kinase domain-containing protein 2, mitochondrial from Homo sapiens (Human).